We begin with the raw amino-acid sequence, 439 residues long: Cysteine desulfurase-like protein ustD (439 aa).

Residues 1–25 (MKSVATSSLDDVDKDSVPLGSSING) form a disordered region. Residues 120 to 121 (TT), asparagine 206, and 255 to 257 (SWY) each bind pyridoxal 5'-phosphate. Lysine 258 carries the N6-(pyridoxal phosphate)lysine modification.

The protein belongs to the class-V pyridoxal-phosphate-dependent aminotransferase family. Requires pyridoxal 5'-phosphate as cofactor.

It participates in mycotoxin biosynthesis. Cysteine desulfurase-like protein; part of the gene cluster that mediates the biosynthesis of the secondary metabolite ustiloxin B, an antimitotic tetrapeptide. First, ustA is processed by the subtilisin-like endoprotease Kex2 that is outside the ustiloxin B gene cluster, at the C-terminal side of Arg-Lys, after transfer to Golgi apparatus through the endoplasmic reticulum (ER). Cleavage by KEX2 generates 16 peptides YAIG-I to YAIG-XVI. To process the precursor peptide further, at least two peptidases are necessary to cleave the N-terminal and C-terminal sides of the Tyr-Ala-Ile-Gly core peptide which serves as backbone for the synthesis of ustiloxin B, through cyclization and modification of the tyrosine with a non-protein coding amino acid, norvaline. One of the two peptidases must be the serine peptidase ustP; and the other pepdidase is probably ustH. Macrocyclization of the core peptide derived from ustA requires the tyrosinase ustQ, as well as the homologous oxidases ustYa and ustYb, and leads to the production of the first cyclization product N-desmethylustiloxin F. For the formation of N-desmethylustiloxin F, three oxidation steps are required, hydroxylation at the benzylic position, hydroxylation at either the aromatic ring of Tyr or beta-position of Ile, and oxidative cyclization. UstQ may catalyze the oxidation of a phenol moiety, whereas the ustYa and ustYb are most likely responsible for the remaining two-step oxidations. N-desmethylustiloxin F is then methylated by ustM to yield ustiloxin F which in turn substrate of the cytochrome P450 monooxygenase ustC which catalyzes the formation of S-deoxyustiloxin H. The flavoprotein monooxygenases ustF1 and ustF2 then participate in the modification of the side chain of S-deoxyustiloxin H, leading to the synthesis of an oxime intermediate, via ustiloxin H. Finally, carboxylative dehydration performed by the cysteine desulfurase-like protein ustD yields ustiloxin B. The polypeptide is Cysteine desulfurase-like protein ustD (Aspergillus flavus (strain ATCC 200026 / FGSC A1120 / IAM 13836 / NRRL 3357 / JCM 12722 / SRRC 167)).